The primary structure comprises 119 residues: MTRIAGINISDKKHILVALTSIYGIGISLSKKICFSIGIRCDVKINSLTKEKIESLRSIISKFLVEGDLRREKTINIKRLMDIGCYRGLRHRKHLPVRGQRTKTNARTRKGPRKLIKSR.

The segment at 96–119 is disordered; sequence PVRGQRTKTNARTRKGPRKLIKSR.

It belongs to the universal ribosomal protein uS13 family. In terms of assembly, part of the 30S ribosomal subunit. Forms a loose heterodimer with protein S19. Forms two bridges to the 50S subunit in the 70S ribosome.

Its function is as follows. Located at the top of the head of the 30S subunit, it contacts several helices of the 16S rRNA. In the 70S ribosome it contacts the 23S rRNA (bridge B1a) and protein L5 of the 50S subunit (bridge B1b), connecting the 2 subunits; these bridges are implicated in subunit movement. Contacts the tRNAs in the A and P-sites. This is Small ribosomal subunit protein uS13 from Buchnera aphidicola subsp. Cinara cedri (strain Cc).